A 608-amino-acid polypeptide reads, in one-letter code: Aspartate--tRNA(Asp/Asn) ligase (608 aa).

Glu-175 lines the L-aspartate pocket. Residues 199–202 (QLFK) are aspartate. Arg-221 is an L-aspartate binding site. Residues 221 to 223 (RDE) and Gln-230 each bind ATP. Residue His-453 participates in L-aspartate binding. An ATP-binding site is contributed by Glu-487. Position 494 (Arg-494) interacts with L-aspartate. An ATP-binding site is contributed by 539 to 542 (GWDR). Residues 566-608 (IDPLTDAPAAITPQQRKEAGIDAKPKPKAEAQAEAQAEESAEK) form a disordered region. Positions 580 to 596 (QRKEAGIDAKPKPKAEA) are enriched in basic and acidic residues.

It belongs to the class-II aminoacyl-tRNA synthetase family. Type 1 subfamily. In terms of assembly, homodimer.

It localises to the cytoplasm. The catalysed reaction is tRNA(Asx) + L-aspartate + ATP = L-aspartyl-tRNA(Asx) + AMP + diphosphate. Its function is as follows. Aspartyl-tRNA synthetase with relaxed tRNA specificity since it is able to aspartylate not only its cognate tRNA(Asp) but also tRNA(Asn). Reaction proceeds in two steps: L-aspartate is first activated by ATP to form Asp-AMP and then transferred to the acceptor end of tRNA(Asp/Asn). The protein is Aspartate--tRNA(Asp/Asn) ligase of Corynebacterium glutamicum (strain ATCC 13032 / DSM 20300 / JCM 1318 / BCRC 11384 / CCUG 27702 / LMG 3730 / NBRC 12168 / NCIMB 10025 / NRRL B-2784 / 534).